The chain runs to 318 residues: 4-hydroxy-3-methylbut-2-enyl diphosphate reductase (318 aa).

Residue Cys-12 participates in [4Fe-4S] cluster binding. (2E)-4-hydroxy-3-methylbut-2-enyl diphosphate-binding residues include His-41 and His-74. Residues His-41 and His-74 each coordinate dimethylallyl diphosphate. Positions 41 and 74 each coordinate isopentenyl diphosphate. Cys-96 contributes to the [4Fe-4S] cluster binding site. Residue His-124 participates in (2E)-4-hydroxy-3-methylbut-2-enyl diphosphate binding. His-124 is a binding site for dimethylallyl diphosphate. Position 124 (His-124) interacts with isopentenyl diphosphate. Glu-126 serves as the catalytic Proton donor. Thr-168 lines the (2E)-4-hydroxy-3-methylbut-2-enyl diphosphate pocket. [4Fe-4S] cluster is bound at residue Cys-198. (2E)-4-hydroxy-3-methylbut-2-enyl diphosphate is bound by residues Ser-226, Ser-227, Asn-228, and Ser-270. Dimethylallyl diphosphate contacts are provided by Ser-226, Ser-227, Asn-228, and Ser-270. The isopentenyl diphosphate site is built by Ser-226, Ser-227, Asn-228, and Ser-270.

This sequence belongs to the IspH family. It depends on [4Fe-4S] cluster as a cofactor.

It catalyses the reaction isopentenyl diphosphate + 2 oxidized [2Fe-2S]-[ferredoxin] + H2O = (2E)-4-hydroxy-3-methylbut-2-enyl diphosphate + 2 reduced [2Fe-2S]-[ferredoxin] + 2 H(+). The catalysed reaction is dimethylallyl diphosphate + 2 oxidized [2Fe-2S]-[ferredoxin] + H2O = (2E)-4-hydroxy-3-methylbut-2-enyl diphosphate + 2 reduced [2Fe-2S]-[ferredoxin] + 2 H(+). It functions in the pathway isoprenoid biosynthesis; dimethylallyl diphosphate biosynthesis; dimethylallyl diphosphate from (2E)-4-hydroxy-3-methylbutenyl diphosphate: step 1/1. Its pathway is isoprenoid biosynthesis; isopentenyl diphosphate biosynthesis via DXP pathway; isopentenyl diphosphate from 1-deoxy-D-xylulose 5-phosphate: step 6/6. Its function is as follows. Catalyzes the conversion of 1-hydroxy-2-methyl-2-(E)-butenyl 4-diphosphate (HMBPP) into a mixture of isopentenyl diphosphate (IPP) and dimethylallyl diphosphate (DMAPP). Acts in the terminal step of the DOXP/MEP pathway for isoprenoid precursor biosynthesis. The sequence is that of 4-hydroxy-3-methylbut-2-enyl diphosphate reductase from Psychrobacter arcticus (strain DSM 17307 / VKM B-2377 / 273-4).